A 277-amino-acid chain; its full sequence is Probable cytochrome c oxidase subunit 3 (277 aa).

6 consecutive transmembrane segments (helical) span residues 20 to 40 (PWPILTSFALLILVAGGVSFM), 45 to 65 (FNHYILAFGVISVAYCLYSWW), 88 to 108 (IGMALFILTEIMFFGVFFASF), 173 to 193 (CVTALGLTIILGIFFTCMQAY), 211 to 231 (FYLATGFHGAHVIIGTIFLIV), and 255 to 275 (AWYWHFVDVVWLFLFTFVYIF).

It belongs to the cytochrome c oxidase subunit 3 family.

It is found in the cell membrane. The catalysed reaction is 4 Fe(II)-[cytochrome c] + O2 + 8 H(+)(in) = 4 Fe(III)-[cytochrome c] + 2 H2O + 4 H(+)(out). The polypeptide is Probable cytochrome c oxidase subunit 3 (ctaE) (Rickettsia bellii (strain RML369-C)).